The chain runs to 926 residues: LPS-assembly protein LptD (926 aa).

Positions 1 to 22 are cleaved as a signal peptide; the sequence is MALKSPAFRKKFPLLVTGSLLA. Residues 58–99 form a disordered region; that stretch reads VDLPPRPVHDTTSVSSNGTVTSQSTSSGEQVAGTQLVTEAKG. Low complexity predominate over residues 68–85; that stretch reads TTSVSSNGTVTSQSTSSG.

It belongs to the LptD family. Component of the lipopolysaccharide transport and assembly complex. Interacts with LptE and LptA.

It localises to the cell outer membrane. Together with LptE, is involved in the assembly of lipopolysaccharide (LPS) at the surface of the outer membrane. In Pseudomonas savastanoi pv. phaseolicola (strain 1448A / Race 6) (Pseudomonas syringae pv. phaseolicola (strain 1448A / Race 6)), this protein is LPS-assembly protein LptD.